A 350-amino-acid chain; its full sequence is Small ribosomal subunit biogenesis GTPase RsgA (350 aa).

Positions methionine 1–asparagine 17 are enriched in polar residues. The tract at residues methionine 1 to aspartate 33 is disordered. The CP-type G domain maps to threonine 104–phenylalanine 273. GTP is bound by residues asparagine 160–aspartate 163 and glycine 214–serine 222. Zn(2+) contacts are provided by cysteine 297, cysteine 302, histidine 304, and cysteine 310.

It belongs to the TRAFAC class YlqF/YawG GTPase family. RsgA subfamily. Monomer. Associates with 30S ribosomal subunit, binds 16S rRNA. Requires Zn(2+) as cofactor.

It localises to the cytoplasm. One of several proteins that assist in the late maturation steps of the functional core of the 30S ribosomal subunit. Helps release RbfA from mature subunits. May play a role in the assembly of ribosomal proteins into the subunit. Circularly permuted GTPase that catalyzes slow GTP hydrolysis, GTPase activity is stimulated by the 30S ribosomal subunit. This Escherichia coli (strain SMS-3-5 / SECEC) protein is Small ribosomal subunit biogenesis GTPase RsgA.